We begin with the raw amino-acid sequence, 87 residues long: Cell division protein FtsL (87 aa).

Residues 1–3 (MSR) lie on the Cytoplasmic side of the membrane. A helical transmembrane segment spans residues 4–23 (LLLIVLLACSIASAIGVVYM). Residues 24–87 (RHMHRKLFVQ…ETSDIVVIRP (64 aa)) lie on the Periplasmic side of the membrane.

Belongs to the FtsL family. In terms of assembly, part of a complex composed of FtsB, FtsL and FtsQ.

The protein localises to the cell inner membrane. Functionally, essential cell division protein. May link together the upstream cell division proteins, which are predominantly cytoplasmic, with the downstream cell division proteins, which are predominantly periplasmic. The protein is Cell division protein FtsL of Xanthomonas campestris pv. campestris (strain ATCC 33913 / DSM 3586 / NCPPB 528 / LMG 568 / P 25).